The following is a 738-amino-acid chain: NAD(P)H-quinone oxidoreductase subunit 5, chloroplastic (738 aa).

The next 17 membrane-spanning stretches (helical) occupy residues 9 to 29 (WVIP…LFLI), 39 to 59 (IWAF…LHLS), 89 to 109 (VDPL…LVLI), 125 to 145 (FVYI…SNLI), 147 to 167 (IYFF…FWFT), 185 to 205 (GDFG…SLEF), 219 to 239 (NGIN…GAVA), 258 to 278 (TPIS…FLLA), 280 to 300 (LLPL…IGTI), 327 to 347 (LGYM…FHLI), 354 to 374 (ALLF…VGYS), 396 to 416 (TTFL…CFWS), 425 to 445 (WLYS…TAFY), 542 to 562 (LFPL…GIHF), 610 to 630 (SLAI…YSFF), 691 to 711 (GVID…GEEI), and 717 to 737 (GRIS…LFFI).

It belongs to the complex I subunit 5 family. In terms of assembly, NDH is composed of at least 16 different subunits, 5 of which are encoded in the nucleus.

The protein resides in the plastid. It localises to the chloroplast thylakoid membrane. The catalysed reaction is a plastoquinone + NADH + (n+1) H(+)(in) = a plastoquinol + NAD(+) + n H(+)(out). It carries out the reaction a plastoquinone + NADPH + (n+1) H(+)(in) = a plastoquinol + NADP(+) + n H(+)(out). NDH shuttles electrons from NAD(P)H:plastoquinone, via FMN and iron-sulfur (Fe-S) centers, to quinones in the photosynthetic chain and possibly in a chloroplast respiratory chain. The immediate electron acceptor for the enzyme in this species is believed to be plastoquinone. Couples the redox reaction to proton translocation, and thus conserves the redox energy in a proton gradient. The sequence is that of NAD(P)H-quinone oxidoreductase subunit 5, chloroplastic (ndhF) from Zea mays (Maize).